Reading from the N-terminus, the 83-residue chain is Small ribosomal subunit protein bS16 (83 aa).

Belongs to the bacterial ribosomal protein bS16 family.

This chain is Small ribosomal subunit protein bS16, found in Shewanella frigidimarina (strain NCIMB 400).